We begin with the raw amino-acid sequence, 195 residues long: Probable GTP-binding protein EngB (195 aa).

The EngB-type G domain occupies 24–195; that stretch reads GLSEVALSGR…QIWDLIANYL (172 aa). Residues 32-39, 59-63, 77-80, 144-147, and 176-178 each bind GTP; these read GRSNVGKS, GKTQT, DVPG, TKED, and YSS. 2 residues coordinate Mg(2+): S39 and T61.

Belongs to the TRAFAC class TrmE-Era-EngA-EngB-Septin-like GTPase superfamily. EngB GTPase family. It depends on Mg(2+) as a cofactor.

In terms of biological role, necessary for normal cell division and for the maintenance of normal septation. The polypeptide is Probable GTP-binding protein EngB (Staphylococcus haemolyticus (strain JCSC1435)).